Consider the following 80-residue polypeptide: Putative membrane protein insertion efficiency factor (80 aa).

Positions 60-80 are disordered; the sequence is SKTGKDPVPDRFSLKRNQEGE. Residues 62 to 80 are compositionally biased toward basic and acidic residues; the sequence is TGKDPVPDRFSLKRNQEGE.

It belongs to the UPF0161 family.

It is found in the cell membrane. Functionally, could be involved in insertion of integral membrane proteins into the membrane. This Streptococcus pneumoniae serotype 4 (strain ATCC BAA-334 / TIGR4) protein is Putative membrane protein insertion efficiency factor.